Here is a 234-residue protein sequence, read N- to C-terminus: Leucyl/phenylalanyl-tRNA--protein transferase (234 aa).

It belongs to the L/F-transferase family.

It is found in the cytoplasm. The catalysed reaction is N-terminal L-lysyl-[protein] + L-leucyl-tRNA(Leu) = N-terminal L-leucyl-L-lysyl-[protein] + tRNA(Leu) + H(+). The enzyme catalyses N-terminal L-arginyl-[protein] + L-leucyl-tRNA(Leu) = N-terminal L-leucyl-L-arginyl-[protein] + tRNA(Leu) + H(+). It catalyses the reaction L-phenylalanyl-tRNA(Phe) + an N-terminal L-alpha-aminoacyl-[protein] = an N-terminal L-phenylalanyl-L-alpha-aminoacyl-[protein] + tRNA(Phe). Functions in the N-end rule pathway of protein degradation where it conjugates Leu, Phe and, less efficiently, Met from aminoacyl-tRNAs to the N-termini of proteins containing an N-terminal arginine or lysine. This chain is Leucyl/phenylalanyl-tRNA--protein transferase, found in Syntrophobacter fumaroxidans (strain DSM 10017 / MPOB).